Reading from the N-terminus, the 255-residue chain is Syntaxin-23 (255 aa).

Residues 1–31 are disordered; the sequence is MSFQDLEAGRGRSLASSRNINGGGSRQDTTQ. Position 2 is an N-acetylserine (Ser-2). The span at 14–31 shows a compositional bias: polar residues; the sequence is LASSRNINGGGSRQDTTQ. A t-SNARE coiled-coil homology domain is found at 184–246; the sequence is EAVIEEREQG…AQGKSHLVRH (63 aa).

The protein belongs to the syntaxin family. In terms of assembly, part of the t-SNARE complex. Interacts with RGS1. As to expression, expressed at higher levels in leaves, flowers and stems than in roots.

The protein resides in the membrane. In terms of biological role, may function in the docking or fusion of transport vesicles with the prevacuolar membrane. The protein is Syntaxin-23 (SYP23) of Arabidopsis thaliana (Mouse-ear cress).